Here is a 293-residue protein sequence, read N- to C-terminus: ATP synthase gamma chain (293 aa).

Belongs to the ATPase gamma chain family. As to quaternary structure, F-type ATPases have 2 components, CF(1) - the catalytic core - and CF(0) - the membrane proton channel. CF(1) has five subunits: alpha(3), beta(3), gamma(1), delta(1), epsilon(1). CF(0) has three main subunits: a, b and c.

The protein localises to the cell membrane. Its function is as follows. Produces ATP from ADP in the presence of a proton gradient across the membrane. The gamma chain is believed to be important in regulating ATPase activity and the flow of protons through the CF(0) complex. This is ATP synthase gamma chain from Methylacidiphilum infernorum (isolate V4) (Methylokorus infernorum (strain V4)).